Reading from the N-terminus, the 149-residue chain is Calmodulin (149 aa).

A2 is modified (N-acetylalanine). EF-hand domains follow at residues 8 to 43 (EQVS…LGQN), 44 to 79 (PSES…KMKD), 81 to 116 (DSEE…IGEK), and 117 to 149 (LTDD…MMQK). Residues D21, D23, D25, Q27, E32, D57, D59, N61, T63, E68, D94, D96, N98, E105, D130, D132, D134, R136, and E141 each contribute to the Ca(2+) site.

Belongs to the calmodulin family.

Calmodulin mediates the control of a large number of enzymes, ion channels and other proteins by Ca(2+). Among the enzymes to be stimulated by the calmodulin-Ca(2+) complex are a number of protein kinases and phosphatases. This Emericella nidulans (strain FGSC A4 / ATCC 38163 / CBS 112.46 / NRRL 194 / M139) (Aspergillus nidulans) protein is Calmodulin (camA).